The sequence spans 437 residues: Trigger factor (437 aa).

Residues 163-248 (GDIAVINFEG…LNQIKAKVLP (86 aa)) enclose the PPIase FKBP-type domain.

It belongs to the FKBP-type PPIase family. Tig subfamily.

It localises to the cytoplasm. It catalyses the reaction [protein]-peptidylproline (omega=180) = [protein]-peptidylproline (omega=0). In terms of biological role, involved in protein export. Acts as a chaperone by maintaining the newly synthesized protein in an open conformation. Functions as a peptidyl-prolyl cis-trans isomerase. This is Trigger factor from Bdellovibrio bacteriovorus (strain ATCC 15356 / DSM 50701 / NCIMB 9529 / HD100).